A 317-amino-acid chain; its full sequence is Insulin-like growth factor-binding protein 2 (317 aa).

Positions 1–33 are cleaved as a signal peptide; the sequence is MQPRLGGPALLLLPPLLLLLLLGAGGGDCGARA. Positions 35–126 constitute an IGFBP N-terminal domain; that stretch reads VLFRCPPCTP…VHGEGTCEKH (92 aa). Intrachain disulfides connect C39/C76, C42/C78, C50/C79, C68/C82, C90/C103, and C97/C123. Disordered regions lie at residues 125–151 and 189–218; these read KHGDAEYSASPEQVADNGEEHSEGGQV and EQHRQMGKGGKHHLGLEEPKKLRPPPARTP. The region spanning 216 to 298 is the Thyroglobulin type-1 domain; the sequence is RTPCQQELDQ…APTIRGDPEC (83 aa). Intrachain disulfides connect C219-C253, C264-C275, and C277-C298. A Cell attachment site motif is present at residues 293-295; that stretch reads RGD.

In terms of assembly, interacts with IGF1. Interacts with IGF2. Interacts (via RGD motif) with integrin alpha5/ITGA5; this interaction induces cell migration, adhesion or apoptosis according to the context. Interacts with PTPRB; this interaction leads to PTPRB dimerization and inactivation. Post-translationally, cleaved by MMP9 leading to release of free IGF2 from IGFBP2-IGF2 complex, which contributes to enhance the motility and the growth of astrocytes. O-glycosylated. As to expression, expressed in abundance in selected adult tissues, namely liver, kidney, adrenal, pituitary and choroid plexus.

It is found in the secreted. Multifunctional protein that plays a critical role in regulating the availability of IGFs such as IGF1 and IGF2 to their receptors and thereby regulates IGF-mediated cellular processes including proliferation, differentiation, and apoptosis in a cell-type specific manner. Functions coordinately with receptor protein tyrosine phosphatase beta/PTPRB and the IGF1 receptor to regulate IGF1-mediated signaling by stimulating the phosphorylation of PTEN leading to its inactivation and AKT1 activation. Plays a positive role in cell migration via interaction with integrin alpha5/ITGA5 through an RGD motif. Additionally, interaction with ITGA5/ITGB1 enhances the adhesion of endothelial progenitor cells to endothelial cells. Upon mitochondrial damage, facilitates apoptosis with ITGA5 of podocytes, and then activates the phosphorylation of focal adhesion kinase (FAK)-mediated mitochondrial injury. The protein is Insulin-like growth factor-binding protein 2 (IGFBP2) of Ovis aries (Sheep).